We begin with the raw amino-acid sequence, 476 residues long: Bifunctional protein HldE (476 aa).

The interval 1–318 (MAQYSAEFKQ…ENAIHARPET (318 aa)) is ribokinase. 195 to 198 (NMSE) is an ATP binding site. D264 is a catalytic residue. Positions 344-476 (MTNGCFDILH…VIEKIKLLKD (133 aa)) are cytidylyltransferase.

It in the N-terminal section; belongs to the carbohydrate kinase PfkB family. The protein in the C-terminal section; belongs to the cytidylyltransferase family. As to quaternary structure, homodimer.

It catalyses the reaction D-glycero-beta-D-manno-heptose 7-phosphate + ATP = D-glycero-beta-D-manno-heptose 1,7-bisphosphate + ADP + H(+). The catalysed reaction is D-glycero-beta-D-manno-heptose 1-phosphate + ATP + H(+) = ADP-D-glycero-beta-D-manno-heptose + diphosphate. It functions in the pathway nucleotide-sugar biosynthesis; ADP-L-glycero-beta-D-manno-heptose biosynthesis; ADP-L-glycero-beta-D-manno-heptose from D-glycero-beta-D-manno-heptose 7-phosphate: step 1/4. The protein operates within nucleotide-sugar biosynthesis; ADP-L-glycero-beta-D-manno-heptose biosynthesis; ADP-L-glycero-beta-D-manno-heptose from D-glycero-beta-D-manno-heptose 7-phosphate: step 3/4. Catalyzes the phosphorylation of D-glycero-D-manno-heptose 7-phosphate at the C-1 position to selectively form D-glycero-beta-D-manno-heptose-1,7-bisphosphate. In terms of biological role, catalyzes the ADP transfer from ATP to D-glycero-beta-D-manno-heptose 1-phosphate, yielding ADP-D-glycero-beta-D-manno-heptose. The polypeptide is Bifunctional protein HldE (Haemophilus influenzae (strain 86-028NP)).